We begin with the raw amino-acid sequence, 118 residues long: Large ribosomal subunit protein bL20 (118 aa).

This sequence belongs to the bacterial ribosomal protein bL20 family.

Its function is as follows. Binds directly to 23S ribosomal RNA and is necessary for the in vitro assembly process of the 50S ribosomal subunit. It is not involved in the protein synthesizing functions of that subunit. This Staphylococcus haemolyticus (strain JCSC1435) protein is Large ribosomal subunit protein bL20.